A 178-amino-acid polypeptide reads, in one-letter code: Large ribosomal subunit protein bL25 (178 aa).

This sequence belongs to the bacterial ribosomal protein bL25 family. CTC subfamily. In terms of assembly, part of the 50S ribosomal subunit; part of the 5S rRNA/L5/L18/L25 subcomplex. Contacts the 5S rRNA. Binds to the 5S rRNA independently of L5 and L18.

This is one of the proteins that binds to the 5S RNA in the ribosome where it forms part of the central protuberance. The protein is Large ribosomal subunit protein bL25 of Helicobacter hepaticus (strain ATCC 51449 / 3B1).